Consider the following 271-residue polypeptide: CAAX prenyl protease 2 (271 aa).

Residues 1–9 (MISSYKYNP) lie on the Extracellular side of the membrane. The helical transmembrane segment at 10-30 (KLYFLSTFVVTYILWFTGAYL) threads the bilayer. At 31–38 (SFSSTYSG) the chain is on the cytoplasmic side. A helical transmembrane segment spans residues 39 to 59 (IYMLIMLPGLMAPFIISTILI). Residues 60-82 (AKSKNNELKKDFINRLFNLKLIN) lie on the Extracellular side of the membrane. A helical transmembrane segment spans residues 83–105 (LKTIPVVFLLMPAVILLSILLSI). Over 106–125 (PFGGSISQFQFSGGFSFSTD) the chain is Cytoplasmic. A helical transmembrane segment spans residues 126-149 (FVPVLFLLLLAATFEELGWRGYAF). Residue Glu140 is the Proton donor/acceptor of the active site. The Extracellular portion of the chain corresponds to 150 to 159 (DSLQSRYSLF). The helical transmembrane segment at 160 to 179 (KASILFGIFWSLWHFPLIFV) threads the bilayer. His173 functions as the Proton donor/acceptor in the catalytic mechanism. The Cytoplasmic segment spans residues 180–192 (NNSYQYEIFNQSI). The helical transmembrane segment at 193 to 213 (WYGLNFFLSILPMGIIITWMC) threads the bilayer. Over 214-219 (LKNRKS) the chain is Extracellular. A helical membrane pass occupies residues 220–237 (IILAIIFHFLINLNQELL). At 238–243 (AITQDT) the chain is on the cytoplasmic side. Residues 244–263 (KIIETGVLFLVAAAIILYDK) form a helical membrane-spanning segment. Over 264–271 (KMFFEKLG) the chain is Extracellular.

It belongs to the peptidase U48 family.

The protein resides in the cell membrane. The enzyme catalyses Hydrolyzes the peptide bond -P2-(S-farnesyl or geranylgeranyl)C-P1'-P2'-P3'-COOH where P1' and P2' are amino acids with aliphatic sidechains and P3' is any C-terminal residue.. Its activity is regulated as follows. Activity is unaffected by metalloprotease inhibitors 5 mM EDTA and 5 mM Zn(2+). Activity partially inhibited by 1,10-phenanthroline and 1,7-phenanthroline. Its function is as follows. Protease involved in the processing of a variety of prenylated proteins containing the C-terminal CAAX motif, where C is a cysteine modified with an isoprenoid lipid, A is an aliphatic amino acid and X is any C-terminal amino acid. Proteolytically removes the C-terminal three residues of farnesylated proteins, leaving the prenylated cysteine as the new C-terminus. Hydrolysis depends on a farnesylated cysteine residue and no activity is shown towards geranylgeranylated peptides. This Methanococcus maripaludis (strain DSM 14266 / JCM 13030 / NBRC 101832 / S2 / LL) protein is CAAX prenyl protease 2.